The primary structure comprises 142 residues: MIKKIAIIMAFDFGTKKIGIAIGQKITGTTQSLEILPSKFGIPNWKKIEHIFNVWKPNKLIVGLPLKMNGNTQHITLLSKRFAVQLTHRFKITVEMHDERFTTIEARSIYFQHFRYYYRKKTTPIDSIAAEIILKSWLNQND.

The protein belongs to the YqgF nuclease family.

The protein resides in the cytoplasm. Could be a nuclease involved in processing of the 5'-end of pre-16S rRNA. The sequence is that of Putative pre-16S rRNA nuclease from Blochmanniella floridana.